We begin with the raw amino-acid sequence, 204 residues long: Transmembrane protein 186 (204 aa).

The Mitochondrial matrix portion of the chain corresponds to 1 to 69 (MLELLCRVSP…RLVAALSRLK (69 aa)). A helical membrane pass occupies residues 70–90 (VYQAVITAAGTPIVFALGSAG). The Mitochondrial intermembrane portion of the chain corresponds to 91 to 95 (QLSTD). Residues 96 to 116 (ALAIYAAIGVTGLITLTLASY) traverse the membrane as a helical segment. Topologically, residues 117–204 (ASSNLVGFIY…RQLFEGLFGN (88 aa)) are mitochondrial matrix.

The protein belongs to the TMEM186 family. In terms of assembly, associates with mitochondrial complex I assembly intermediates during its biogenesis.

Its subcellular location is the mitochondrion inner membrane. In terms of biological role, as part of the MCIA complex, required for efficient assembly of the mitochondrial complex I. The polypeptide is Transmembrane protein 186 (Drosophila melanogaster (Fruit fly)).